The primary structure comprises 564 residues: Dihydropyrimidinase-related protein 5 (564 aa).

2 positions are modified to phosphothreonine: Thr-509 and Thr-514. Phosphoserine occurs at positions 532 and 538. Omega-N-methylarginine is present on Arg-559.

It belongs to the metallo-dependent hydrolases superfamily. Hydantoinase/dihydropyrimidinase family. As to quaternary structure, homotetramer, and heterotetramer with other DPYS-like proteins. Interacts with DPYSL2, DPYSL3 and DPYSL4. Interacts with SEPTIN4 isoform 4. Interacts with MAP2 and TUBB3. Detected in brain.

It localises to the cytoplasm. In terms of biological role, involved in the negative regulation of dendrite outgrowth. The protein is Dihydropyrimidinase-related protein 5 (Dpysl5) of Mus musculus (Mouse).